We begin with the raw amino-acid sequence, 224 residues long: UPF0758 protein Psyr_0222 (224 aa).

Positions 102–224 constitute an MPN domain; it reads ALENPTQVRS…PLSMVERGLM (123 aa). His173, His175, and Asp186 together coordinate Zn(2+). The JAMM motif signature appears at 173 to 186; sequence HNHPSGITTPSRSD.

This sequence belongs to the UPF0758 family.

The polypeptide is UPF0758 protein Psyr_0222 (Pseudomonas syringae pv. syringae (strain B728a)).